A 306-amino-acid polypeptide reads, in one-letter code: Tryptophan 2,3-dioxygenase (306 aa).

Residues 1–33 are disordered; the sequence is MQPPGDDAAPRCPFAGAHAPDAPHVPEAAGDDA. Substrate-binding positions include 75–79, Tyr137, and Arg141; that span reads FIIQH. His264 contributes to the heme binding site. Thr278 lines the substrate pocket.

It belongs to the tryptophan 2,3-dioxygenase family. Homotetramer. Requires heme as cofactor.

It catalyses the reaction L-tryptophan + O2 = N-formyl-L-kynurenine. Its pathway is amino-acid degradation; L-tryptophan degradation via kynurenine pathway; L-kynurenine from L-tryptophan: step 1/2. Functionally, heme-dependent dioxygenase that catalyzes the oxidative cleavage of the L-tryptophan (L-Trp) pyrrole ring and converts L-tryptophan to N-formyl-L-kynurenine. Catalyzes the oxidative cleavage of the indole moiety. This is Tryptophan 2,3-dioxygenase from Burkholderia pseudomallei (strain 1106a).